A 403-amino-acid chain; its full sequence is Phosphomevalonate dehydratase large subunit (403 aa).

Residues Gly48, Val49, Ser50, Asn79, and Pro80 each coordinate (R)-5-phosphomevalonate. Residue Cys119 coordinates [4Fe-4S] cluster. Glu138 and Ser139 together coordinate (R)-5-phosphomevalonate. Residues Cys301 and Cys358 each coordinate [4Fe-4S] cluster. Lys378 provides a ligand contact to (R)-5-phosphomevalonate.

The protein belongs to the AcnX type II large subunit family. In terms of assembly, heterodimer composed of a large subunit (PMDh-L) and a small subunit (PMDh-S). The cofactor is [4Fe-4S] cluster.

The catalysed reaction is (R)-5-phosphomevalonate = (2E)-3-methyl-5-phosphooxypent-2-enoate + H2O. The protein operates within isoprenoid biosynthesis; isopentenyl diphosphate biosynthesis via mevalonate pathway. In terms of biological role, component of a hydro-lyase that catalyzes the dehydration of mevalonate 5-phosphate (MVA5P) to form trans-anhydromevalonate 5-phosphate (tAHMP). Involved in the archaeal mevalonate (MVA) pathway, which provides fundamental precursors for isoprenoid biosynthesis, such as isopentenyl diphosphate (IPP) and dimethylallyl diphosphate (DMAPP). In Methanocaldococcus jannaschii (strain ATCC 43067 / DSM 2661 / JAL-1 / JCM 10045 / NBRC 100440) (Methanococcus jannaschii), this protein is Phosphomevalonate dehydratase large subunit.